Here is a 511-residue protein sequence, read N- to C-terminus: MSRGPEEVNRLTESTYRNVMEQFNPGLRNLINLGKNYEKAVNAMILAGKAYYDGVAKIGEIATGSPVSTELGHVLIEISSTHKKLNESLDENFKKFHKEIIHELEKKIELDVKYMNATLKRYQTEHKNKLESLEKSQAELKKIRRKSQGSRNALKYEHKEIEYVETVTSRQSEIQKFIADGCKEALLEEKRRFCFLVDKHCGFANHIHYYHLQSAELLNSKLPRWQETCVDAIKVPEKIMNMIEEIKTPASTPVSGTPQASPMIERSNVVRKDYDTLSKCSPKMPPAPSGRAYTSPLIDMFNNPATAAPNSQRVNNSTGTSEDPSLQRSVSVATGLNMMKKQKVKTIFPHTAGSNKTLLSFAQGDVITLLIPEEKDGWLYGEHDVSKARGWFPSSYTKLLEENETEAVTVPTPSPTPVRSISTVNLSENSSVVIPPPDYLECLSMGAAADRRADSARTTSTFKAPASKPETAAPNDANGTAKPPFLSGENPFATVKLRPTVTNDRSAPIIR.

The IMD domain occupies 1 to 249 (MSRGPEEVNR…MNMIEEIKTP (249 aa)). The stretch at 115-154 (MNATLKRYQTEHKNKLESLEKSQAELKKIRRKSQGSRNAL) forms a coiled coil. 2 positions are modified to phosphothreonine: threonine 248 and threonine 257. Residues serine 261 and serine 281 each carry the phosphoserine modification. The tract at residues 302–328 (NNPATAAPNSQRVNNSTGTSEDPSLQR) is disordered. A compositionally biased stretch (polar residues) spans 303–328 (NPATAAPNSQRVNNSTGTSEDPSLQR). A phosphoserine mark is found at serine 331 and serine 354. In terms of domain architecture, SH3 spans 339 to 402 (MKKQKVKTIF…PSSYTKLLEE (64 aa)). At threonine 412 the chain carries Phosphothreonine. Phosphoserine occurs at positions 414, 420, and 422. Positions 451-511 (RRADSARTTS…TNDRSAPIIR (61 aa)) are disordered. The interval 483-511 (PPFLSGENPFATVKLRPTVTNDRSAPIIR) is binds F-actin.

In terms of assembly, interacts with RAC1. Binds to F-actin. Interacts with FASLG. Interacts (via SH3 domain) with E.coli effector protein EspF(U) (via PXXP motifs). Identified in a complex containing at least WASL, BAIAP2L1 and E.coli EspF(U). Interacts with E.coli intimin receptor Tir. Post-translationally, phosphorylated on tyrosine in response to insulin.

It is found in the cytoplasm. The protein localises to the cytoskeleton. Functionally, may function as adapter protein. Involved in the formation of clusters of actin bundles. Plays a role in the reorganization of the actin cytoskeleton in response to bacterial infection. This Homo sapiens (Human) protein is BAR/IMD domain-containing adapter protein 2-like 1 (BAIAP2L1).